The following is a 248-amino-acid chain: uncharacterized protein (248 aa).

A coiled-coil region spans residues 33–57; sequence EWQLSEGQKRCEEINRQNRQLRVEK.

This is an uncharacterized protein from Escherichia coli (strain K12).